Reading from the N-terminus, the 750-residue chain is MLRVKNQLFLLSPHYLKQVKESSGSRLIRQRFLHQQQPLHPEWAALAKRQLKGKNPEDLIWHTPEGISIKPLYSKRDTTDLPEELPGVKPFTRGPYPTMYTFRPWTIRQYAGFSTVEESNKFYKDNIKAGQQGLSVAFDLATHRGYDSDNPRVRGDVGMAGVAIDTVEDTKILFDGIPLEKMSVSMTMNGAVIPVLANFIVTGEEQGVPKEKLTGTIQNDILKEFMVRNTYIFPPEPSMKIIADIFQYTSKHMPKFNSISISGYHMQEAGADAILELAYTLADGLEYSRTGLQAGLTIDEFAPRLSFFWGIGMNFYMEIAKMRAGRRLWAHLIEKMFQPKSSKSLLLRAHCQTSGWSLTEQDPYNNIVRTAIEAMAAVFGGTQSLHTNSFDEALGLPTVKSARIARNTQIIIQEESGIPKVADPWGGSYMMESLTNDVYDAALKLINEIEEMGGMAKAVAEGIPKLRIEECAARRQARIDSGSEVIVGVNKYQLEKEDAVEVLAIDNTSVRNRQIEKLQKIKSSRDQALAERCLAALTECAASGDGNILALAVDASRARCTVGEITDALKKVFGEHKANDRMVSGAYRQEFGESKEITSAIKRVHKFMEREGRRPRLLVAKMGQDGHDRGAKVIATGFADLGFDVDIGPLFQTPREVAQQAVDADVHAVGVSTLAAGHKTLVPELIKELNSLGRPDILVMCGGVIPPQDYEFLFEVGVSNVFGPGTRIPKAAVQVLDDIEKCLEKKQQSV.

The N-terminal 32 residues, 1-32, are a transit peptide targeting the mitochondrion; that stretch reads MLRVKNQLFLLSPHYLKQVKESSGSRLIRQRF. Gln50 serves as a coordination point for malonyl-CoA. Position 89 is an N6-acetyllysine (Lys89). Residues 96–99 and 106–110 each bind malonyl-CoA; these read YPTM and TIRQY. The residue at position 212 (Lys212) is an N6-acetyllysine. Malonyl-CoA contacts are provided by residues 216–218, Arg228, Lys255, His265, and 304–306; these read TIQ and RLS. An N6-acetyllysine modification is found at Lys335. At Lys343 the chain carries N6-succinyllysine. At Ser481 the chain carries Phosphoserine. Lys595 carries the post-translational modification N6-succinyllysine. Lys602 is subject to N6-acetyllysine. The B12-binding domain maps to 614–746; it reads RPRLLVAKMG…DDIEKCLEKK (133 aa). Residue His627 participates in adenosylcob(III)alamin binding.

Belongs to the methylmalonyl-CoA mutase family. Homodimer. Interacts (the apoenzyme form) with MMAA; the interaction is GTP dependent. Adenosylcob(III)alamin serves as cofactor.

The protein localises to the mitochondrion matrix. Its subcellular location is the mitochondrion. It is found in the cytoplasm. It carries out the reaction (R)-methylmalonyl-CoA = succinyl-CoA. With respect to regulation, inhibited by itaconyl-CoA, a metabolite that inactivates the coenzyme B12 cofactor. Catalyzes the reversible isomerization of methylmalonyl-CoA (MMCoA) (generated from branched-chain amino acid metabolism and degradation of dietary odd chain fatty acids and cholesterol) to succinyl-CoA (3-carboxypropionyl-CoA), a key intermediate of the tricarboxylic acid cycle. This Macaca fascicularis (Crab-eating macaque) protein is Methylmalonyl-CoA mutase, mitochondrial (MMUT).